A 544-amino-acid chain; its full sequence is Membrane protein insertase YidC (544 aa).

Residues 6–26 (NILLIGLLFVSFLLWQQWQAD) traverse the membrane as a helical segment. The segment at 34 to 58 (AAQTQSSIPASTVADSHSSDVPDAD) is disordered. Residues 39-49 (SSIPASTVADS) show a composition bias toward polar residues. 4 helical membrane passes run 345–365 (LLMF…LITL), 423–443 (GGCL…WVLL), 460–480 (LSVQ…MFVM), and 503–523 (VIFT…WLVG).

The protein belongs to the OXA1/ALB3/YidC family. Type 1 subfamily. As to quaternary structure, interacts with the Sec translocase complex via SecD. Specifically interacts with transmembrane segments of nascent integral membrane proteins during membrane integration.

The protein resides in the cell inner membrane. In terms of biological role, required for the insertion and/or proper folding and/or complex formation of integral membrane proteins into the membrane. Involved in integration of membrane proteins that insert both dependently and independently of the Sec translocase complex, as well as at least some lipoproteins. Aids folding of multispanning membrane proteins. This is Membrane protein insertase YidC from Shewanella halifaxensis (strain HAW-EB4).